We begin with the raw amino-acid sequence, 274 residues long: Dermonecrotic toxin SdSicTox-betaIIB1ai (274 aa).

His5 is an active-site residue. 2 residues coordinate Mg(2+): Glu25 and Asp27. The active-site Nucleophile is the His41. Cystine bridges form between Cys45-Cys51 and Cys47-Cys190. Asp85 is a Mg(2+) binding site.

Belongs to the arthropod phospholipase D family. Class II subfamily. It depends on Mg(2+) as a cofactor. In terms of tissue distribution, expressed by the venom gland.

The protein resides in the secreted. It carries out the reaction an N-(acyl)-sphingosylphosphocholine = an N-(acyl)-sphingosyl-1,3-cyclic phosphate + choline. The enzyme catalyses an N-(acyl)-sphingosylphosphoethanolamine = an N-(acyl)-sphingosyl-1,3-cyclic phosphate + ethanolamine. It catalyses the reaction a 1-acyl-sn-glycero-3-phosphocholine = a 1-acyl-sn-glycero-2,3-cyclic phosphate + choline. The catalysed reaction is a 1-acyl-sn-glycero-3-phosphoethanolamine = a 1-acyl-sn-glycero-2,3-cyclic phosphate + ethanolamine. In terms of biological role, dermonecrotic toxins cleave the phosphodiester linkage between the phosphate and headgroup of certain phospholipids (sphingolipid and lysolipid substrates), forming an alcohol (often choline) and a cyclic phosphate. This toxin acts on sphingomyelin (SM). It may also act on ceramide phosphoethanolamine (CPE), lysophosphatidylcholine (LPC) and lysophosphatidylethanolamine (LPE), but not on lysophosphatidylserine (LPS), and lysophosphatidylglycerol (LPG). It acts by transphosphatidylation, releasing exclusively cyclic phosphate products as second products. Induces dermonecrosis, hemolysis, increased vascular permeability, edema, inflammatory response, and platelet aggregation. The protein is Dermonecrotic toxin SdSicTox-betaIIB1ai of Sicarius cf. damarensis (strain GJB-2008) (Six-eyed sand spider).